Consider the following 190-residue polypeptide: Potassium-transporting ATPase KdpC subunit (190 aa).

The chain crosses the membrane as a helical span at residues 11-31 (LIVLMSLITGVAYPLVVTGVA).

This sequence belongs to the KdpC family. The system is composed of three essential subunits: KdpA, KdpB and KdpC.

The protein localises to the cell inner membrane. Functionally, part of the high-affinity ATP-driven potassium transport (or Kdp) system, which catalyzes the hydrolysis of ATP coupled with the electrogenic transport of potassium into the cytoplasm. This subunit acts as a catalytic chaperone that increases the ATP-binding affinity of the ATP-hydrolyzing subunit KdpB by the formation of a transient KdpB/KdpC/ATP ternary complex. In Pseudomonas savastanoi pv. phaseolicola (strain 1448A / Race 6) (Pseudomonas syringae pv. phaseolicola (strain 1448A / Race 6)), this protein is Potassium-transporting ATPase KdpC subunit.